The primary structure comprises 733 residues: Polyribonucleotide nucleotidyltransferase (733 aa).

Positions 404 to 424 (NYNMPPYSTGETGRVGSPKRR) are disordered. Residues Asp516 and Asp522 each coordinate Mg(2+). The 60-residue stretch at 582–641 (PRIITVHIPVDKIGEVIGPKGKMINQIQDDTGANISIEDDGTIFIGADNGDSAESARSMI) folds into the KH domain. In terms of domain architecture, S1 motif spans 653–725 (GERYLGTVVK…DRGKLSLVLA (73 aa)).

This sequence belongs to the polyribonucleotide nucleotidyltransferase family. Mg(2+) is required as a cofactor.

The protein localises to the cytoplasm. It catalyses the reaction RNA(n+1) + phosphate = RNA(n) + a ribonucleoside 5'-diphosphate. Functionally, involved in mRNA degradation. Catalyzes the phosphorolysis of single-stranded polyribonucleotides processively in the 3'- to 5'-direction. This is Polyribonucleotide nucleotidyltransferase from Cutibacterium acnes (strain DSM 16379 / KPA171202) (Propionibacterium acnes).